The following is a 194-amino-acid chain: GTP cyclohydrolase 1 (194 aa).

Residues Cys-85, His-88, and Cys-156 each contribute to the Zn(2+) site.

This sequence belongs to the GTP cyclohydrolase I family. As to quaternary structure, toroid-shaped homodecamer, composed of two pentamers of five dimers.

It catalyses the reaction GTP + H2O = 7,8-dihydroneopterin 3'-triphosphate + formate + H(+). It functions in the pathway cofactor biosynthesis; 7,8-dihydroneopterin triphosphate biosynthesis; 7,8-dihydroneopterin triphosphate from GTP: step 1/1. In Bacteroides fragilis (strain YCH46), this protein is GTP cyclohydrolase 1.